Here is a 137-residue protein sequence, read N- to C-terminus: uncharacterized protein (137 aa).

The HTH marR-type domain maps to asparagine 5–glutamine 136. A DNA-binding region (H-T-H motif) is located at residues glutamine 51–glutamate 74.

This is an uncharacterized protein from Bacillus subtilis (strain 168).